We begin with the raw amino-acid sequence, 698 residues long: Ion-translocating oxidoreductase complex subunit C (698 aa).

4Fe-4S ferredoxin-type domains are found at residues 366-397 and 407-436; these read TEMG…QQLY and KARN…VQYY. Residues Cys377, Cys380, Cys383, Cys387, Cys416, Cys419, Cys422, and Cys426 each contribute to the [4Fe-4S] cluster site.

It belongs to the 4Fe4S bacterial-type ferredoxin family. RnfC subfamily. As to quaternary structure, the complex is composed of six subunits: RnfA, RnfB, RnfC, RnfD, RnfE and RnfG. [4Fe-4S] cluster serves as cofactor.

The protein resides in the cell inner membrane. Part of a membrane-bound complex that couples electron transfer with translocation of ions across the membrane. The sequence is that of Ion-translocating oxidoreductase complex subunit C from Yersinia pseudotuberculosis serotype O:3 (strain YPIII).